Consider the following 122-residue polypeptide: Large ribosomal subunit protein uL14 (122 aa).

It belongs to the universal ribosomal protein uL14 family. As to quaternary structure, part of the 50S ribosomal subunit. Forms a cluster with proteins L3 and L19. In the 70S ribosome, L14 and L19 interact and together make contacts with the 16S rRNA in bridges B5 and B8.

In terms of biological role, binds to 23S rRNA. Forms part of two intersubunit bridges in the 70S ribosome. The polypeptide is Large ribosomal subunit protein uL14 (Bacillus licheniformis (strain ATCC 14580 / DSM 13 / JCM 2505 / CCUG 7422 / NBRC 12200 / NCIMB 9375 / NCTC 10341 / NRRL NRS-1264 / Gibson 46)).